Here is a 261-residue protein sequence, read N- to C-terminus: uncharacterized protein (261 aa).

Positions 15-75 (SINPEDIISG…AMTDRALSKY (61 aa)) constitute an HTH tetR-type domain. Positions 38 to 57 (SMPLLGKHLGVGVTSIYWYF) form a DNA-binding region, H-T-H motif. Residues 234-261 (AAGEVAVRRPTATADAPTPGARAKAVAR) form a disordered region. Positions 241–261 (RRPTATADAPTPGARAKAVAR) are enriched in low complexity.

This is an uncharacterized protein from Mycobacterium bovis (strain ATCC BAA-935 / AF2122/97).